A 231-amino-acid chain; its full sequence is Ribose-5-phosphate isomerase A (231 aa).

Residues 28–31, 83–86, and 96–99 contribute to the substrate site; these read TGST, DGAD, and KGGG. Catalysis depends on Glu105, which acts as the Proton acceptor. Lys123 serves as a coordination point for substrate.

The protein belongs to the ribose 5-phosphate isomerase family. Homodimer.

The catalysed reaction is aldehydo-D-ribose 5-phosphate = D-ribulose 5-phosphate. Its pathway is carbohydrate degradation; pentose phosphate pathway; D-ribose 5-phosphate from D-ribulose 5-phosphate (non-oxidative stage): step 1/1. Its function is as follows. Catalyzes the reversible conversion of ribose-5-phosphate to ribulose 5-phosphate. In Parvibaculum lavamentivorans (strain DS-1 / DSM 13023 / NCIMB 13966), this protein is Ribose-5-phosphate isomerase A.